The following is a 177-amino-acid chain: Large ribosomal subunit protein uL6 (177 aa).

This sequence belongs to the universal ribosomal protein uL6 family. In terms of assembly, part of the 50S ribosomal subunit.

Functionally, this protein binds to the 23S rRNA, and is important in its secondary structure. It is located near the subunit interface in the base of the L7/L12 stalk, and near the tRNA binding site of the peptidyltransferase center. This chain is Large ribosomal subunit protein uL6, found in Photobacterium profundum (strain SS9).